We begin with the raw amino-acid sequence, 845 residues long: Leucine--tRNA ligase (845 aa).

The 'HIGH' region motif lies at 40–51; that stretch reads PYPSGAGLHVGH. The 'KMSKS' region motif lies at 623 to 627; it reads KMSKS. ATP is bound at residue Lys-626.

It belongs to the class-I aminoacyl-tRNA synthetase family.

It localises to the cytoplasm. The enzyme catalyses tRNA(Leu) + L-leucine + ATP = L-leucyl-tRNA(Leu) + AMP + diphosphate. The sequence is that of Leucine--tRNA ligase from Protochlamydia amoebophila (strain UWE25).